Consider the following 331-residue polypeptide: Phosphoribosylformylglycinamidine cyclo-ligase (331 aa).

This sequence belongs to the AIR synthase family.

It is found in the cytoplasm. The catalysed reaction is 2-formamido-N(1)-(5-O-phospho-beta-D-ribosyl)acetamidine + ATP = 5-amino-1-(5-phospho-beta-D-ribosyl)imidazole + ADP + phosphate + H(+). It participates in purine metabolism; IMP biosynthesis via de novo pathway; 5-amino-1-(5-phospho-D-ribosyl)imidazole from N(2)-formyl-N(1)-(5-phospho-D-ribosyl)glycinamide: step 2/2. The sequence is that of Phosphoribosylformylglycinamidine cyclo-ligase from Clostridium tetani (strain Massachusetts / E88).